A 500-amino-acid chain; its full sequence is ATP synthase subunit beta (500 aa).

Position 157–164 (157–164) interacts with ATP; sequence GGAGVGKT.

It belongs to the ATPase alpha/beta chains family. F-type ATPases have 2 components, CF(1) - the catalytic core - and CF(0) - the membrane proton channel. CF(1) has five subunits: alpha(3), beta(3), gamma(1), delta(1), epsilon(1). CF(0) has three main subunits: a(1), b(2) and c(9-12). The alpha and beta chains form an alternating ring which encloses part of the gamma chain. CF(1) is attached to CF(0) by a central stalk formed by the gamma and epsilon chains, while a peripheral stalk is formed by the delta and b chains.

It localises to the cell inner membrane. It catalyses the reaction ATP + H2O + 4 H(+)(in) = ADP + phosphate + 5 H(+)(out). Produces ATP from ADP in the presence of a proton gradient across the membrane. The catalytic sites are hosted primarily by the beta subunits. The sequence is that of ATP synthase subunit beta from Salinibacter ruber (strain DSM 13855 / M31).